Reading from the N-terminus, the 553-residue chain is Copine-9 (553 aa).

2 consecutive C2 domains span residues 1 to 125 and 132 to 255; these read MSLS…ERPL and KCGT…FTVY. Residues D163, D169, D225, D227, and D233 each coordinate Ca(2+). A VWFA domain is found at 299–500; it reads NFTVAIDFTA…VQFVPFRDYV (202 aa). Residues 531-553 are disordered; the sequence is TRDIQPRPPPPVSPNPTPAPEQP. Positions 536-553 are enriched in pro residues; the sequence is PRPPPPVSPNPTPAPEQP.

The protein belongs to the copine family. Ca(2+) is required as a cofactor.

Probable calcium-dependent phospholipid-binding protein that may play a role in calcium-mediated intracellular processes. Plays a role in dendrite formation by melanocytes. This chain is Copine-9, found in Mus musculus (Mouse).